A 254-amino-acid polypeptide reads, in one-letter code: Imidazole glycerol phosphate synthase subunit HisF (254 aa).

Residues Asp14 and Asp133 contribute to the active site.

It belongs to the HisA/HisF family. Heterodimer of HisH and HisF.

The protein localises to the cytoplasm. It catalyses the reaction 5-[(5-phospho-1-deoxy-D-ribulos-1-ylimino)methylamino]-1-(5-phospho-beta-D-ribosyl)imidazole-4-carboxamide + L-glutamine = D-erythro-1-(imidazol-4-yl)glycerol 3-phosphate + 5-amino-1-(5-phospho-beta-D-ribosyl)imidazole-4-carboxamide + L-glutamate + H(+). Its pathway is amino-acid biosynthesis; L-histidine biosynthesis; L-histidine from 5-phospho-alpha-D-ribose 1-diphosphate: step 5/9. IGPS catalyzes the conversion of PRFAR and glutamine to IGP, AICAR and glutamate. The HisF subunit catalyzes the cyclization activity that produces IGP and AICAR from PRFAR using the ammonia provided by the HisH subunit. This Nitratiruptor sp. (strain SB155-2) protein is Imidazole glycerol phosphate synthase subunit HisF.